The chain runs to 211 residues: Histidine biosynthesis bifunctional protein HisIE (211 aa).

The tract at residues 1–107 (MNKLIDFSKG…FNSEIESRFK (107 aa)) is phosphoribosyl-AMP cyclohydrolase. Residues 108-211 (IQALAQTIHQ…KGERKEVREW (104 aa)) form a phosphoribosyl-ATP pyrophosphohydrolase region.

In the N-terminal section; belongs to the PRA-CH family. It in the C-terminal section; belongs to the PRA-PH family.

Its subcellular location is the cytoplasm. It catalyses the reaction 1-(5-phospho-beta-D-ribosyl)-ATP + H2O = 1-(5-phospho-beta-D-ribosyl)-5'-AMP + diphosphate + H(+). It carries out the reaction 1-(5-phospho-beta-D-ribosyl)-5'-AMP + H2O = 1-(5-phospho-beta-D-ribosyl)-5-[(5-phospho-beta-D-ribosylamino)methylideneamino]imidazole-4-carboxamide. It functions in the pathway amino-acid biosynthesis; L-histidine biosynthesis; L-histidine from 5-phospho-alpha-D-ribose 1-diphosphate: step 2/9. Its pathway is amino-acid biosynthesis; L-histidine biosynthesis; L-histidine from 5-phospho-alpha-D-ribose 1-diphosphate: step 3/9. The polypeptide is Histidine biosynthesis bifunctional protein HisIE (Staphylococcus epidermidis (strain ATCC 35984 / DSM 28319 / BCRC 17069 / CCUG 31568 / BM 3577 / RP62A)).